A 156-amino-acid polypeptide reads, in one-letter code: MKTLDINQIKQYLPHRYPLLLVDRVLNWESGKSITAIKNVTVNEEFFNGHFPHKPVMPGVLMIEALAQTAALLSFLTMGQKPDDNSVVYFIGIDGARFKRPVEPGDQLKMEVEILRNARGIWKYKATGSVDGQLALEAELMCTMRTINDASPAAGQ.

Histidine 50 is an active-site residue.

It belongs to the thioester dehydratase family. FabZ subfamily.

The protein resides in the cytoplasm. The enzyme catalyses a (3R)-hydroxyacyl-[ACP] = a (2E)-enoyl-[ACP] + H2O. Its function is as follows. Involved in unsaturated fatty acids biosynthesis. Catalyzes the dehydration of short chain beta-hydroxyacyl-ACPs and long chain saturated and unsaturated beta-hydroxyacyl-ACPs. The sequence is that of 3-hydroxyacyl-[acyl-carrier-protein] dehydratase FabZ from Janthinobacterium sp. (strain Marseille) (Minibacterium massiliensis).